We begin with the raw amino-acid sequence, 248 residues long: Pathogenesis-related thaumatin-like protein 3.4 (248 aa).

The first 25 residues, 1-25 (MARAILWVLLTVMAVSLLLHAGVEG), serve as a signal peptide directing secretion. Disulfide bonds link C34/C227, C75/C85, C90/C96, C141/C216, C146/C199, C154/C164, C168/C177, and C178/C186. A glycan (N-linked (GlcNAc...) asparagine) is linked at N235.

The protein belongs to the thaumatin family. Mainly expressed in male and female strobili, and, at lower levels, in roots of seedlings and saplings.

Functionally, may be involved in disease resistance. The protein is Pathogenesis-related thaumatin-like protein 3.4 of Cryptomeria japonica (Japanese cedar).